We begin with the raw amino-acid sequence, 83 residues long: Colicin-E5 immunity protein (83 aa).

This protein is able to protect a cell, which harbors the plasmid ColE5 encoding colicin E5, against colicin E5. This Escherichia coli protein is Colicin-E5 immunity protein (imm).